We begin with the raw amino-acid sequence, 417 residues long: NADH-quinone oxidoreductase subunit D (417 aa).

The protein belongs to the complex I 49 kDa subunit family. In terms of assembly, NDH-1 is composed of 14 different subunits. Subunits NuoB, C, D, E, F, and G constitute the peripheral sector of the complex.

It is found in the cell inner membrane. It catalyses the reaction a quinone + NADH + 5 H(+)(in) = a quinol + NAD(+) + 4 H(+)(out). Functionally, NDH-1 shuttles electrons from NADH, via FMN and iron-sulfur (Fe-S) centers, to quinones in the respiratory chain. The immediate electron acceptor for the enzyme in this species is believed to be ubiquinone. Couples the redox reaction to proton translocation (for every two electrons transferred, four hydrogen ions are translocated across the cytoplasmic membrane), and thus conserves the redox energy in a proton gradient. In Burkholderia cenocepacia (strain HI2424), this protein is NADH-quinone oxidoreductase subunit D.